Consider the following 307-residue polypeptide: MTETTKTHVILLACGSFNPITKGHIQMFERARDYLHKTGRFIVIGGIVSPVHDSYGKQGLVSSRHRLIMCQLAVQNSDWIRVDPWECYQDTWQTTCSVLEHHRDLMKRVTGCILSNVNTPSMTPVIGQPQHENTQPIYQNSNVPTKPTAAKILGKVGESLSRICCVRPPVERFTFVDENANLGTVMRYEEIELRILLLCGSDLLESFCIPGLWNEADMEVIVGDFGIVVVPRDAADTDRIMNHSSILRKYKNNIMVVKDDINHPMSVVSSTKSRLALQHGDGHVVDYLSQPVIDYILKSQLYINASG.

S16 and F17 together coordinate NAD(+). H24 contributes to the ATP binding site. NAD(+) is bound by residues W92 and T95. Residues C164 and C165 are each lipidated (S-palmitoyl cysteine). 5 residues coordinate NAD(+): G200, D202, L212, W213, and R232. Position 271 to 274 (271 to 274) interacts with ATP; the sequence is TKSR.

The protein belongs to the eukaryotic NMN adenylyltransferase family. In terms of assembly, monomer. Mg(2+) is required as a cofactor. Post-translationally, degraded in response to injured neurite. Degradation is caused by polyubiquitination by MYCBP2 after recognition by FBXO45. Palmitoylated; palmitoylation is required for membrane association. In terms of tissue distribution, expressed predominantly in the brain and nervous system.

Its subcellular location is the golgi apparatus membrane. The protein resides in the cytoplasmic vesicle membrane. It is found in the cytoplasm. The protein localises to the cell projection. It localises to the axon. It carries out the reaction beta-nicotinamide D-ribonucleotide + ATP + H(+) = diphosphate + NAD(+). The enzyme catalyses nicotinate beta-D-ribonucleotide + ATP + H(+) = deamido-NAD(+) + diphosphate. It participates in cofactor biosynthesis; NAD(+) biosynthesis; NAD(+) from nicotinamide D-ribonucleotide: step 1/1. Its pathway is cofactor biosynthesis; NAD(+) biosynthesis; deamido-NAD(+) from nicotinate D-ribonucleotide: step 1/1. Its activity is regulated as follows. Inhibited by P1-(adenosine-5')-P3-(nicotinamide-riboside-5')-triphosphate (Np3AD) and P1-(adenosine-5')-P4-(nicotinamide-riboside-5')-tetraphosphate (Np4AD). In terms of biological role, nicotinamide/nicotinate-nucleotide adenylyltransferase that acts as an axon maintenance factor. Axon survival factor required for the maintenance of healthy axons: acts by delaying Wallerian axon degeneration, an evolutionarily conserved process that drives the loss of damaged axons. Catalyzes the formation of NAD(+) from nicotinamide mononucleotide (NMN) and ATP. Can also use the deamidated form; nicotinic acid mononucleotide (NaMN) as substrate but with a lower efficiency. Cannot use triazofurin monophosphate (TrMP) as substrate. Also catalyzes the reverse reaction, i.e. the pyrophosphorolytic cleavage of NAD(+). For the pyrophosphorolytic activity prefers NAD(+), NADH and NaAD as substrates and degrades nicotinic acid adenine dinucleotide phosphate (NHD) less effectively. Fails to cleave phosphorylated dinucleotides NADP(+), NADPH and NaADP(+). Also acts as an activator of ADP-ribosylation by supporting the catalytic activity of PARP16 and promoting mono-ADP-ribosylation of ribosomes by PARP16. May be involved in the maintenance of axonal integrity. The protein is Nicotinamide/nicotinic acid mononucleotide adenylyltransferase 2 of Mus musculus (Mouse).